The primary structure comprises 239 residues: tRNA (guanine-N(1)-)-methyltransferase (239 aa).

S-adenosyl-L-methionine-binding positions include G108 and 128 to 133 (VGNFIV).

It belongs to the RNA methyltransferase TrmD family. As to quaternary structure, homodimer.

The protein resides in the cytoplasm. It carries out the reaction guanosine(37) in tRNA + S-adenosyl-L-methionine = N(1)-methylguanosine(37) in tRNA + S-adenosyl-L-homocysteine + H(+). Functionally, specifically methylates guanosine-37 in various tRNAs. This Helicobacter hepaticus (strain ATCC 51449 / 3B1) protein is tRNA (guanine-N(1)-)-methyltransferase.